The primary structure comprises 433 residues: 2,2-dialkylglycine decarboxylase (433 aa).

Lys-272 is subject to N6-(pyridoxal phosphate)lysine.

It belongs to the class-III pyridoxal-phosphate-dependent aminotransferase family. In terms of assembly, homotetramer. Pyridoxal 5'-phosphate serves as cofactor.

The catalysed reaction is 2,2-dialkylglycine + pyruvate + H(+) = dialkyl ketone + L-alanine + CO2. In terms of biological role, the dialkylglycine decarboxylase is of interest because it normally catalyzes both decarboxylation and amino transfer. It may be more properly described as a decarboxylating aminotransferase rather than an aminotransferring decarboxylase. This Burkholderia cepacia (Pseudomonas cepacia) protein is 2,2-dialkylglycine decarboxylase (dgdA).